Reading from the N-terminus, the 400-residue chain is Aspartate/prephenate aminotransferase (400 aa).

Residues G39, W125, and N175 each coordinate L-aspartate. K239 bears the N6-(pyridoxal phosphate)lysine mark. Position 375 (R375) interacts with L-aspartate.

The protein belongs to the class-I pyridoxal-phosphate-dependent aminotransferase family. Homodimer. Pyridoxal 5'-phosphate is required as a cofactor.

The protein localises to the cytoplasm. It catalyses the reaction L-aspartate + 2-oxoglutarate = oxaloacetate + L-glutamate. It carries out the reaction L-arogenate + 2-oxoglutarate = prephenate + L-glutamate. Its function is as follows. Catalyzes the reversible conversion of aspartate and 2-oxoglutarate to glutamate and oxaloacetate. Can also transaminate prephenate in the presence of glutamate. The chain is Aspartate/prephenate aminotransferase from Cereibacter sphaeroides (strain ATCC 17029 / ATH 2.4.9) (Rhodobacter sphaeroides).